The sequence spans 380 residues: Flap endonuclease 1 (380 aa).

An N-domain region spans residues 1–104 (MGIQGLAKLI…GELAKRSERR (104 aa)). R19 carries the post-translational modification Symmetric dimethylarginine; by PRMT5. D34 is a binding site for Mg(2+). DNA-binding residues include R47 and R70. K80 carries the N6-acetyllysine modification. D86 is a binding site for Mg(2+). Residues R100 and R104 each carry the symmetric dimethylarginine; by PRMT5 modification. Residues 122–253 (EVEKFTKRLV…KRAVDLIQKH (132 aa)) are I-domain. Residues E158, E160, D179, and D181 each contribute to the Mg(2+) site. A DNA-binding site is contributed by E158. S187 is subject to Phosphoserine; by CDK2. R192 is subject to Symmetric dimethylarginine; by PRMT5. At S197 the chain carries Phosphoserine. G231 and D233 together coordinate DNA. D233 contacts Mg(2+). S255, S293, and S335 each carry phosphoserine. The disordered stretch occupies residues 327–380 (RLSKSRQGSTQGRLDDFFKVTGSLSSAKRKEPEPKGAAKKKAKTGAAGKFKRGK). At T336 the chain carries Phosphothreonine. The segment at 336-344 (TQGRLDDFF) is interaction with PCNA. N6-acetyllysine is present on residues K354, K375, K377, and K380. Positions 363–380 (AAKKKAKTGAAGKFKRGK) are enriched in basic residues.

It belongs to the XPG/RAD2 endonuclease family. FEN1 subfamily. Interacts with PCNA. Three molecules of FEN1 bind to one PCNA trimer with each molecule binding to one PCNA monomer. PCNA stimulates the nuclease activity without altering cleavage specificity. The C-terminal domain binds EP300; can bind simultaneously to both PCNA and EP300. Interacts with DDX11; this interaction is direct and increases flap endonuclease activity of FEN1. Interacts with WDR4; regulating its endonuclease activity. Interacts with POLB. Mg(2+) serves as cofactor. Post-translationally, acetylated by EP300. Acetylation inhibits both endonuclease and exonuclease activity. Acetylation also reduces DNA-binding activity but does not affect interaction with PCNA or EP300. In terms of processing, phosphorylation upon DNA damage induces relocalization to the nuclear plasma. Phosphorylation at Ser-187 by CDK2 occurs during late S-phase and results in dissociation from PCNA. Methylation at Arg-192 by PRMT5 impedes Ser-187 phosphorylation and increases interaction with PCNA.

The protein resides in the nucleus. Its subcellular location is the nucleolus. The protein localises to the nucleoplasm. It localises to the mitochondrion. In terms of biological role, structure-specific nuclease with 5'-flap endonuclease and 5'-3' exonuclease activities involved in DNA replication and repair. During DNA replication, cleaves the 5'-overhanging flap structure that is generated by displacement synthesis when DNA polymerase encounters the 5'-end of a downstream Okazaki fragment. It enters the flap from the 5'-end and then tracks to cleave the flap base, leaving a nick for ligation. Also involved in the long patch base excision repair (LP-BER) pathway, by cleaving within the apurinic/apyrimidinic (AP) site-terminated flap. Acts as a genome stabilization factor that prevents flaps from equilibrating into structures that lead to duplications and deletions. Also possesses 5'-3' exonuclease activity on nicked or gapped double-stranded DNA, and exhibits RNase H activity. Also involved in replication and repair of rDNA and in repairing mitochondrial DNA. The protein is Flap endonuclease 1 of Bos taurus (Bovine).